Reading from the N-terminus, the 255-residue chain is Hydroxyacylglutathione hydrolase (255 aa).

Positions 56, 58, 60, 61, 114, 133, and 171 each coordinate Zn(2+).

It belongs to the metallo-beta-lactamase superfamily. Glyoxalase II family. In terms of assembly, monomer. Zn(2+) serves as cofactor.

It carries out the reaction an S-(2-hydroxyacyl)glutathione + H2O = a 2-hydroxy carboxylate + glutathione + H(+). Its pathway is secondary metabolite metabolism; methylglyoxal degradation; (R)-lactate from methylglyoxal: step 2/2. Functionally, thiolesterase that catalyzes the hydrolysis of S-D-lactoyl-glutathione to form glutathione and D-lactic acid. This is Hydroxyacylglutathione hydrolase from Rhodopseudomonas palustris (strain ATCC BAA-98 / CGA009).